The sequence spans 229 residues: Protein GrpE (229 aa).

Positions Met-1–Gly-89 are disordered. Over residues Ala-24–Asp-36 the composition is skewed to low complexity. The segment covering Glu-39 to Ala-50 has biased composition (basic and acidic residues). Low complexity predominate over residues Lys-65–Ser-84.

Belongs to the GrpE family. Homodimer.

It localises to the cytoplasm. In terms of biological role, participates actively in the response to hyperosmotic and heat shock by preventing the aggregation of stress-denatured proteins, in association with DnaK and GrpE. It is the nucleotide exchange factor for DnaK and may function as a thermosensor. Unfolded proteins bind initially to DnaJ; upon interaction with the DnaJ-bound protein, DnaK hydrolyzes its bound ATP, resulting in the formation of a stable complex. GrpE releases ADP from DnaK; ATP binding to DnaK triggers the release of the substrate protein, thus completing the reaction cycle. Several rounds of ATP-dependent interactions between DnaJ, DnaK and GrpE are required for fully efficient folding. This chain is Protein GrpE, found in Bifidobacterium animalis subsp. lactis (strain AD011).